The primary structure comprises 1591 residues: GATOR1 complex protein DEPDC5 (1591 aa).

Disordered stretches follow at residues glycine 427–isoleucine 455, leucine 478–isoleucine 532, and leucine 695–proline 720. Positions serine 430–arginine 439 are enriched in basic and acidic residues. Positions serine 494–serine 508 are enriched in low complexity. Residue serine 505 is modified to Phosphoserine. Polar residues predominate over residues serine 518–isoleucine 532. Residue serine 992 is modified to Phosphoserine. 2 disordered regions span residues serine 1040 to serine 1064 and serine 1118 to glutamine 1153. Over residues serine 1118–tyrosine 1149 the composition is skewed to polar residues. A DEP domain is found at proline 1175–methionine 1250. A Phosphoserine modification is found at serine 1518.

Belongs to the IML1 family. In terms of assembly, within the GATOR complex, component of the GATOR1 subcomplex, made of DEPDC5, NPRL2 and NPRL3. GATOR1 mediates the strong interaction of the GATOR complex with small GTPases Rag (RagA/RRAGA, RagB/RRAGB, RagC/RRAGC and/or RagD/RRAGD) heterodimers. GATOR1 interacts with GPR155/LYCHOS; interaction takes place in presence of cholesterol and prevents interaction between GATOR1 and KICSTOR. Interacts with SAMTOR; interaction is direct and takes place in presence of methionine, leading to inhibit the activity of the GATOR1 complex. Phosphorylation at Ser-992 and Ser-1518 by AKT1 and PIM1 inhibit the activity of DEPDC5, releasing inhibition of the mTORC1 pathway. In terms of processing, ubiquitinated. Amino acid-induced 'Lys-48'-linked polyubiquitination of DEPDC5 by the BCR(KLHL22) ubiquitin ligase complex leads to DEPDC5 proteasomal degradation and inhibition of the GATOR1 complex. Ubiquitination may occur at multiple lysines. In terms of tissue distribution, expressed at low levels in all brain regions. Expressed throughout brain development, including in midgestation embryonic head (11.5 dpc), neonatal brain and whole adult brain. Present in neurons and absent in non-neuronal cells, including astrocytes (at protein level).

It localises to the lysosome membrane. The protein localises to the cytoplasm. It is found in the cytosol. The protein resides in the perinuclear region. As a component of the GATOR1 complex functions as an inhibitor of the amino acid-sensing branch of the mTORC1 pathway. In response to amino acid depletion, the GATOR1 complex has GTPase activating protein (GAP) activity and strongly increases GTP hydrolysis by RagA/RRAGA (or RagB/RRAGB) within heterodimeric Rag complexes, thereby turning them into their inactive GDP-bound form, releasing mTORC1 from lysosomal surface and inhibiting mTORC1 signaling. In the presence of abundant amino acids, the GATOR1 complex is negatively regulated by GATOR2, the other GATOR subcomplex, in this amino acid-sensing branch of the TORC1 pathway. Within the GATOR1 complex, DEPDC5 mediates direct interaction with the nucleotide-binding pocket of small GTPases Rag (RagA/RRAGA, RagB/RRAGB, RagC/RRAGC and/or RagD/RRAGD) and coordinates their nucleotide loading states by promoting RagA/RRAGA or RagB/RRAGB into their GDP-binding state and RagC/RRAGC or RagD/RRAGD into their GTP-binding state. However, it does not execute the GAP activity, which is mediated by NPRL2. This Mus musculus (Mouse) protein is GATOR1 complex protein DEPDC5.